Consider the following 340-residue polypeptide: 3-isopropylmalate dehydrogenase (340 aa).

Residues Arg88, Arg98, Arg122, and Asp212 each coordinate substrate. Mg(2+) contacts are provided by Asp212, Asp236, and Asp240. Residue 272–284 participates in NAD(+) binding; it reads GSAPDIAGQGIAD.

This sequence belongs to the isocitrate and isopropylmalate dehydrogenases family. LeuB type 2 subfamily. In terms of assembly, homodimer. The cofactor is Mg(2+). It depends on Mn(2+) as a cofactor.

It localises to the cytoplasm. The enzyme catalyses (2R,3S)-3-isopropylmalate + NAD(+) = 4-methyl-2-oxopentanoate + CO2 + NADH. It participates in amino-acid biosynthesis; L-leucine biosynthesis; L-leucine from 3-methyl-2-oxobutanoate: step 3/4. Catalyzes the oxidation of 3-carboxy-2-hydroxy-4-methylpentanoate (3-isopropylmalate) to 3-carboxy-4-methyl-2-oxopentanoate. The product decarboxylates to 4-methyl-2 oxopentanoate. This chain is 3-isopropylmalate dehydrogenase (leuB), found in Corynebacterium glutamicum (strain ATCC 13032 / DSM 20300 / JCM 1318 / BCRC 11384 / CCUG 27702 / LMG 3730 / NBRC 12168 / NCIMB 10025 / NRRL B-2784 / 534).